A 391-amino-acid chain; its full sequence is Winged helix repair factor 1 (391 aa).

2 stretches are compositionally biased toward low complexity: residues 1–24 (MNIK…PSPI) and 49–63 (LSFN…SNIN). Positions 1-95 (MNIKRNQNNS…SITTTTATST (95 aa)) are disordered. Residues 64-74 (GEEDNDDDDRE) show a composition bias toward acidic residues. The segment covering 82-95 (NPNPSITTTTATST) has biased composition (low complexity).

The protein belongs to the STK19 family.

Its subcellular location is the nucleus. DNA-binding protein which is required for efficient transcription-coupled nucleotide excision repair. The sequence is that of Winged helix repair factor 1 from Dictyostelium discoideum (Social amoeba).